Reading from the N-terminus, the 382-residue chain is uncharacterized protein (382 aa).

12 consecutive transmembrane segments (helical) span residues 14–34 (GLLL…LWLA), 45–65 (MVSS…GYLI), 75–95 (YLAS…VGFW), 102–122 (FIAG…LMCS), 131–151 (LLAA…LLVS), 157–177 (LLHV…PLLF), 204–224 (LGVN…GLMP), 231–251 (GMAN…GILG), 270–290 (VQVF…AMAP), 291–311 (ALFI…AWAC), 325–345 (ALLL…AMLM), and 349–369 (SDNL…LMLL).

This sequence belongs to the major facilitator superfamily. YcaD (TC 2.A.1.26) family.

It localises to the cell inner membrane. This is an uncharacterized protein from Salmonella paratyphi A (strain ATCC 9150 / SARB42).